The following is a 224-amino-acid chain: Large ribosomal subunit protein bL25 (224 aa).

The disordered stretch occupies residues 195–224; that stretch reads TVEEVDEAAEVDAADVPATEQGTDESKDGE. Residues 197–207 are compositionally biased toward acidic residues; that stretch reads EEVDEAAEVDA.

The protein belongs to the bacterial ribosomal protein bL25 family. CTC subfamily. As to quaternary structure, part of the 50S ribosomal subunit; part of the 5S rRNA/L5/L18/L25 subcomplex. Contacts the 5S rRNA. Binds to the 5S rRNA independently of L5 and L18.

Its function is as follows. This is one of the proteins that binds to the 5S RNA in the ribosome where it forms part of the central protuberance. The polypeptide is Large ribosomal subunit protein bL25 (Psychrobacter cryohalolentis (strain ATCC BAA-1226 / DSM 17306 / VKM B-2378 / K5)).